Consider the following 272-residue polypeptide: MSVYVITGASKGIGFGFVKSISEDPANLVVGLVRDKAATEKKVAEELGGRTNIHILHGDLTSYESLKQAAADTAKIVGERGVDYLVANGAYPSQFDAYVPIGALGDQVEELEEVSAKLFKTNVVGNIHLFNLFIPLVKQSKAKKVIAISSGHGDLDWINNNDIEISSLYGASKAALNVVVAKFSVQYKPEGVLFFSLSPGAVEVGHYDNVSPEQVQGLMGFMGKIQAYAPHFKGAVPVEDAVRTIRATWERASIETGYAGAFVSQHGNKQWL.

The NADP(+) site is built by isoleucine 13, aspartate 59, and asparagine 88. Catalysis depends on proton donor residues serine 150 and tyrosine 169. Tyrosine 169, lysine 173, and valine 202 together coordinate NADP(+). Lysine 173 (lowers pKa of active site Tyr) is an active-site residue.

The protein belongs to the short-chain dehydrogenases/reductases (SDR) family.

Its pathway is secondary metabolite biosynthesis. In terms of biological role, short-chain dehydrogenase/reductase; part of the gene cluster that mediates the biosynthesis of iso-A82775C, a enylepoxycyclohexane and biosynthetic precursor of the chloropestolide anticancer natural products. Within the cluster, the prenyltransferase iacE prenylates siccayne to generate pestalodiol E, using dimethylallyl diphosphate (DMAPP) as cosubstrate. The probable oxidoreductase iacF is then involved in the epoxidation of pestalodiol F to pestalodiol F, which is further converted to pestalofone A by the short-chain dehydrogenase/reductase iacG. Iso-A82775C is subsequently generated from pestalofone A by the short-chain dehydrogenase/reductase iacC. Iso-A82775C is further condensed with maldoxin via a Diels-Alder reaction to produce the anticancer natural products chloropestolides A to E. The sequence is that of Short-chain dehydrogenase/reductase iacC from Pestalotiopsis fici (strain W106-1 / CGMCC3.15140).